A 424-amino-acid polypeptide reads, in one-letter code: Hemagglutinin-esterase (424 aa).

A signal peptide spans 1-16; it reads MFLLPRFCLVCSIIGT. The tract at residues 7-127 is esterase domain 1; sequence FCLVCSIIGT…NNDIWMQNKG (121 aa). Residues 17–392 are Virion surface-facing; sequence FGFENPPTNV…PICVYDPLPI (376 aa). Ser-40 acts as the Nucleophile in catalysis. A disulfide bond links Cys-44 and Cys-65. 5 N-linked (GlcNAc...) asparagine; by host glycosylation sites follow: Asn-54, Asn-89, Asn-153, Asn-236, and Asn-301. Cystine bridges form between Cys-113/Cys-162, Cys-197/Cys-276, and Cys-205/Cys-249. The interval 128 to 266 is receptor binding; it reads LFYTQVYKKM…GNYLAISNEL (139 aa). The interval 267–379 is esterase domain 2; it reads LLTVPTKAIC…NCPTAASIIS (113 aa). Residues Cys-307 and Cys-312 are joined by a disulfide bond. Asn-316 carries an N-linked (GlcNAc...) asparagine; by host glycan. Active-site charge relay system residues include Asp-326 and His-329. Cysteines 347 and 371 form a disulfide. An N-linked (GlcNAc...) asparagine; by host glycan is attached at Asn-358. The chain crosses the membrane as a helical span at residues 393-413; it reads ILLGILLGVAVIVIVVLLLYF. Over 414–424 the chain is Intravirion; the sequence is MVDNGIRQHYA.

It belongs to the influenza type C/coronaviruses hemagglutinin-esterase family. In terms of assembly, homodimer; disulfide-linked. Forms a complex with the M protein in the pre-Golgi. Associates then with S-M complex to form a ternary complex S-M-HE. Post-translationally, N-glycosylated in the host RER.

It localises to the virion membrane. The protein localises to the host cell membrane. The catalysed reaction is N-acetyl-9-O-acetylneuraminate + H2O = N-acetylneuraminate + acetate + H(+). It carries out the reaction N-acetyl-4-O-acetylneuraminate + H2O = N-acetylneuraminate + acetate + H(+). Its function is as follows. Structural protein that makes short spikes at the surface of the virus. Contains receptor binding and receptor-destroying activities. Mediates de-O-acetylation of N-acetyl-4-O-acetylneuraminic acid, which is probably the receptor determinant recognized by the virus on the surface of erythrocytes and susceptible cells. This receptor-destroying activity is important for virus release as it probably helps preventing self-aggregation and ensures the efficient spread of the progeny virus from cell to cell. May serve as a secondary viral attachment protein for initiating infection, the spike protein being the major one. May become a target for both the humoral and the cellular branches of the immune system. In Sus scrofa (Pig), this protein is Hemagglutinin-esterase.